Consider the following 152-residue polypeptide: Transcriptional repressor NrdR (152 aa).

Positions 1-10 (MKCPSCQHNG) are enriched in polar residues. The disordered stretch occupies residues 1–21 (MKCPSCQHNGSRVLDSRPADE). The segment at 3-34 (CPSCQHNGSRVLDSRPADEGKSIRRRRECEAC) is a zinc-finger region. The region spanning 49-139 (LIVVKKEGVR…VYRQFKDINV (91 aa)) is the ATP-cone domain.

Belongs to the NrdR family. Requires Zn(2+) as cofactor.

In terms of biological role, negatively regulates transcription of bacterial ribonucleotide reductase nrd genes and operons by binding to NrdR-boxes. In Bacillus velezensis (strain DSM 23117 / BGSC 10A6 / LMG 26770 / FZB42) (Bacillus amyloliquefaciens subsp. plantarum), this protein is Transcriptional repressor NrdR.